The chain runs to 422 residues: Exopolygalacturonase clone GBGE184 (422 aa).

The N-terminal stretch at 1 to 31 is a signal peptide; sequence MANARSLVAKANNINVGSLILMALVFGSCVA. PbH1 repeat units follow at residues 200-226, 227-248, 250-270, 280-301, and 310-331; these read TENV…HLSN, ADNV…SVGR, SNNV…SVGS, VSGI…RIKT, and AVDI…IIDQ. N229 carries an N-linked (GlcNAc...) asparagine glycan. Catalysis depends on D241, which acts as the Proton donor. C243 and C260 are oxidised to a cystine. N-linked (GlcNAc...) asparagine glycosylation occurs at N252. Residue H264 is part of the active site. The N-linked (GlcNAc...) asparagine glycan is linked to N287. Intrachain disulfides connect C366–C372 and C404–C420.

This sequence belongs to the glycosyl hydrolase 28 family.

It is found in the secreted. The protein resides in the cell wall. It catalyses the reaction [(1-&gt;4)-alpha-D-galacturonosyl](n) + H2O = alpha-D-galacturonate + [(1-&gt;4)-alpha-D-galacturonosyl](n-1). Functionally, may function in depolymerizing pectin during pollen development, germination, and tube growth. Acts as an exo-polygalacturonase. The protein is Exopolygalacturonase clone GBGE184 (PGA3) of Arabidopsis thaliana (Mouse-ear cress).